A 329-amino-acid chain; its full sequence is GTP 3',8-cyclase (329 aa).

In terms of domain architecture, Radical SAM core spans 8 to 234 (VFARKFYYLR…QLRQRSDGPA (227 aa)). Arg-17 contributes to the GTP binding site. [4Fe-4S] cluster contacts are provided by Cys-24 and Cys-28. Tyr-30 contacts S-adenosyl-L-methionine. [4Fe-4S] cluster is bound at residue Cys-31. Arg-68 contacts GTP. Gly-72 is a binding site for S-adenosyl-L-methionine. Position 99 (Thr-99) interacts with GTP. Ser-123 contacts S-adenosyl-L-methionine. Lys-160 is a binding site for GTP. Met-194 is a binding site for S-adenosyl-L-methionine. Residues Cys-257 and Cys-260 each coordinate [4Fe-4S] cluster. Position 262–264 (262–264 (RLR)) interacts with GTP. Cys-274 lines the [4Fe-4S] cluster pocket.

The protein belongs to the radical SAM superfamily. MoaA family. As to quaternary structure, monomer and homodimer. [4Fe-4S] cluster serves as cofactor.

The enzyme catalyses GTP + AH2 + S-adenosyl-L-methionine = (8S)-3',8-cyclo-7,8-dihydroguanosine 5'-triphosphate + 5'-deoxyadenosine + L-methionine + A + H(+). Its pathway is cofactor biosynthesis; molybdopterin biosynthesis. In terms of biological role, catalyzes the cyclization of GTP to (8S)-3',8-cyclo-7,8-dihydroguanosine 5'-triphosphate. The protein is GTP 3',8-cyclase of Shigella flexneri.